We begin with the raw amino-acid sequence, 988 residues long: Vacuolar sorting protein 18 (988 aa).

The CHCR repeat unit spans residues 589-749 (NKNLNPRRLI…VVKQEKGAKR (161 aa)). Residues 785 to 819 (KEAICSSLEDYNKQIEQLKEEMNDATRGADNIRND) are a coiled coil. The RING-type; degenerate zinc-finger motif lies at 836 to 886 (CGVCKRKILMMSGDFRMAQGYSSAGPLAPFYVFPCGHSFHAQCLITHVTSC).

It belongs to the VPS18 family. As to quaternary structure, core component of at least two putative endosomal tethering complexes, the homotypic fusion and vacuole protein sorting (HOPS) complex and the class C core vacuole/endosome tethering (CORVET) complex. Their common core is composed of the class C Vps proteins VPS11, VCL1, VPS18 and VPS33, which in HOPS further associates with VPS39 and VPS41 and in CORVET with VPS3.

The protein resides in the endosome membrane. It is found in the vacuole membrane. The protein localises to the cytoplasm. Its function is as follows. Essential protein required during embryogenesis. Believed to act as a core component of the putative HOPS endosomal tethering complex and of the class C core vacuole/endosome tethering (CORVET) complex. CORVET is required for vacuolar transport of SYP22. HOPS is required for the central vacuole formation. Involved in root development. Plays a role in vesicle-mediated protein trafficking to lysosomal compartments including the endocytic membrane transport pathways. The polypeptide is Vacuolar sorting protein 18 (Arabidopsis thaliana (Mouse-ear cress)).